The primary structure comprises 217 residues: Small ribosomal subunit protein uS3 (217 aa).

The KH type-2 domain occupies 40–110; it reads IRDLINKGFN…EVYINIHEVR (71 aa).

The protein belongs to the universal ribosomal protein uS3 family. As to quaternary structure, part of the 30S ribosomal subunit. Forms a tight complex with proteins S10 and S14.

Functionally, binds the lower part of the 30S subunit head. Binds mRNA in the 70S ribosome, positioning it for translation. In Rickettsia felis (strain ATCC VR-1525 / URRWXCal2) (Rickettsia azadi), this protein is Small ribosomal subunit protein uS3.